We begin with the raw amino-acid sequence, 86 residues long: Toxin Cn1 (86 aa).

The signal sequence occupies residues 1–19; that stretch reads MNSLLMITACFVLIGTVWA. Residues 20–84 enclose the LCN-type CS-alpha/beta domain; it reads KDGYLVDAKG…TWPLPNKTCS (65 aa). 4 disulfide bridges follow: Cys30/Cys83, Cys34/Cys59, Cys43/Cys64, and Cys47/Cys66. Ser84 bears the Serine amide mark.

This sequence belongs to the long (4 C-C) scorpion toxin superfamily. Sodium channel inhibitor family. Beta subfamily. In terms of tissue distribution, expressed by the venom gland.

The protein resides in the secreted. In terms of biological role, beta toxins bind voltage-independently at site-4 of sodium channels (Nav) and shift the voltage of activation toward more negative potentials thereby affecting sodium channel activation and promoting spontaneous and repetitive firing. The polypeptide is Toxin Cn1 (Centruroides noxius (Mexican scorpion)).